A 203-amino-acid polypeptide reads, in one-letter code: Urease accessory protein UreG (203 aa).

GTP is bound at residue 14–21 (GPVGAGKT).

This sequence belongs to the SIMIBI class G3E GTPase family. UreG subfamily. In terms of assembly, homodimer. UreD, UreF and UreG form a complex that acts as a GTP-hydrolysis-dependent molecular chaperone, activating the urease apoprotein by helping to assemble the nickel containing metallocenter of UreC. The UreE protein probably delivers the nickel.

The protein resides in the cytoplasm. In terms of biological role, facilitates the functional incorporation of the urease nickel metallocenter. This process requires GTP hydrolysis, probably effectuated by UreG. In Jannaschia sp. (strain CCS1), this protein is Urease accessory protein UreG.